The chain runs to 337 residues: Dihydroorotate dehydrogenase (quinone) (337 aa).

FMN-binding positions include 58–62 and Thr82; that span reads AGLDK. Position 62 (Lys62) interacts with substrate. A substrate-binding site is contributed by 107–111; sequence NCMGF. Residues Asn137 and Asn170 each contribute to the FMN site. Substrate is bound at residue Asn170. Ser173 functions as the Nucleophile in the catalytic mechanism. Substrate is bound at residue Asn175. Residues Lys215 and Thr243 each coordinate FMN. 244-245 serves as a coordination point for substrate; sequence NT. FMN contacts are provided by residues Gly266, Gly294, and 315–316; that span reads YS.

It belongs to the dihydroorotate dehydrogenase family. Type 2 subfamily. Monomer. Requires FMN as cofactor.

The protein resides in the cell membrane. The enzyme catalyses (S)-dihydroorotate + a quinone = orotate + a quinol. It participates in pyrimidine metabolism; UMP biosynthesis via de novo pathway; orotate from (S)-dihydroorotate (quinone route): step 1/1. Functionally, catalyzes the conversion of dihydroorotate to orotate with quinone as electron acceptor. In Dichelobacter nodosus (strain VCS1703A), this protein is Dihydroorotate dehydrogenase (quinone).